We begin with the raw amino-acid sequence, 84 residues long: MKIIFLVLMMILSEVYSDRDGYPVHDGTNCKYSCDIREKWEYCTPLCKRRNAKTGYCYAFACWCIGLPDEVKVYGDDGIFCKSG.

Residues 1–17 (MKIIFLVLMMILSEVYS) form the signal peptide. In terms of domain architecture, LCN-type CS-alpha/beta spans 19 to 82 (RDGYPVHDGT…VYGDDGIFCK (64 aa)). Disulfide bonds link cysteine 30-cysteine 81, cysteine 34-cysteine 57, cysteine 43-cysteine 62, and cysteine 47-cysteine 64. Position 83 is a serine amide (serine 83).

The protein belongs to the long (4 C-C) scorpion toxin superfamily. Sodium channel inhibitor family. Beta subfamily. As to expression, expressed by the venom gland.

It localises to the secreted. Functionally, toxin with unknown target. In vivo, induces severe neurotoxic events in mice such as excitability and convulsions, leading to the death of the animals within a few minutes after injection. Exerts very strong cytotoxic effect on a mouse brain tumor cell line (BC3H1) (IC(50)=5 mg/ml). It exerts its effects by inducing a stronger necrosis than apoptosis in BC3H1 cells. This chain is Toxin Acra3, found in Androctonus crassicauda (Arabian fat-tailed scorpion).